We begin with the raw amino-acid sequence, 185 residues long: Protein LURP-one-related 13 (185 aa).

It belongs to the LOR family.

Functionally, might be related to the phospholipid scramblase and tubby-like superfamily of membrane tethered transcription factors. The sequence is that of Protein LURP-one-related 13 from Arabidopsis thaliana (Mouse-ear cress).